We begin with the raw amino-acid sequence, 194 residues long: Outer membrane protein A (194 aa).

The N-terminal stretch at 1 to 24 (MNKPSKFALALAFAAVTASGVASA) is a signal peptide. A beta stranded membrane pass occupies residues 30–38 (WRNPYGNVW). In terms of domain architecture, OmpA-like spans 77–193 (MAAKVVFNAD…RVEIEIVGSR (117 aa)).

It belongs to the outer membrane OOP (TC 1.B.6) superfamily.

The protein localises to the cell outer membrane. In terms of biological role, structural protein that may protect the integrity of the bacterium. This is Outer membrane protein A from Bordetella avium.